The primary structure comprises 442 residues: GTPase Der (442 aa).

2 consecutive EngA-type G domains span residues 2-168 (ATVL…EEAG) and 182-356 (LKVA…EKID). GTP-binding positions include 8 to 15 (GRPNVGKS), 55 to 59 (DTCGL), 118 to 121 (NKVE), 188 to 195 (GKPNAGKS), 235 to 239 (DTAGM), and 301 to 304 (NKSD). A KH-like domain is found at 357 to 442 (LRIPTGLLNN…PIFIKLRRKK (86 aa)).

Belongs to the TRAFAC class TrmE-Era-EngA-EngB-Septin-like GTPase superfamily. EngA (Der) GTPase family. Associates with the 50S ribosomal subunit.

Its function is as follows. GTPase that plays an essential role in the late steps of ribosome biogenesis. In Kosmotoga olearia (strain ATCC BAA-1733 / DSM 21960 / TBF 19.5.1), this protein is GTPase Der.